The chain runs to 2147 residues: Non-reducing polyketide synthase albA (2147 aa).

An N-terminal acylcarrier protein transacylase domain (SAT) region spans residues 8–244 (YLFGDQTSDI…VKAPIHGPYH (237 aa)). One can recognise a Ketosynthase family 3 (KS3) domain in the interval 375–806 (CSKIAIIGMS…GGNTAILLED (432 aa)). Active-site for beta-ketoacyl synthase activity residues include C547, H682, and H724. Residues 912 to 1232 (FVFTGQGAQY…LSSLHLAGID (321 aa)) form a malonyl-CoA:ACP transacylase (MAT) domain region. The active-site For acyl/malonyl transferase activity is the S1001. Residues 1286–1425 (HEFLTTAAQK…CTVRFFDCAA (140 aa)) form an N-terminal hotdog fold region. Residues 1286 to 1598 (HEFLTTAAQK…FQGLSRKILD (313 aa)) form the PKS/mFAS DH domain. A product template (PT) domain region spans residues 1290 to 1603 (TTAAQKVIET…RKILDTVLPP (314 aa)). H1326 (proton acceptor; for dehydratase activity) is an active-site residue. The interval 1452–1598 (DAHRLGRGMV…FQGLSRKILD (147 aa)) is C-terminal hotdog fold. D1511 (proton donor; for dehydratase activity) is an active-site residue. Residues 1608–1637 (KGPARPAASAQKAAPAATSKSRASAPAPAK) are disordered. The span at 1610-1637 (PARPAASAQKAAPAATSKSRASAPAPAK) shows a compositional bias: low complexity. Residues 1642 to 1719 (PSAPSLVKRA…DFKQFLAPMS (78 aa)) enclose the Carrier 1 domain. S1679 carries the post-translational modification O-(pantetheine 4'-phosphoryl)serine. Residues 1719-1759 (SQGEASDGSTSDPESSSSFNGGSSTDESSAGSPVSSPPNEK) form a disordered region. The segment covering 1724-1747 (SDGSTSDPESSSSFNGGSSTDESS) has biased composition (low complexity). The Carrier 2 domain maps to 1760–1837 (IEQHATMKEI…DVEDALGLKP (78 aa)). At S1797 the chain carries O-(pantetheine 4'-phosphoryl)serine. A claisen cyclase domain region spans residues 1873 to 2145 (SPHPRSTSIL…ELGSFIGNAM (273 aa)). The active-site For Claisen cyclase activity is the S1963.

It carries out the reaction 6 malonyl-CoA + acetyl-CoA + 6 H(+) = naphtopyrone YWA1 + 6 CO2 + 7 CoA + H2O. It functions in the pathway secondary metabolite biosynthesis. Functionally, non-reducing polyketide synthase involved in the biosynthesis of bifonsecin B, a dimeric gamma-naphthopyrone. The first step in the biosynthesis of bifonsecin B is the production of gamma-naphthopyrone precursor YWA1 by the non-reducing polyketide synthase albA, via condensation of one acetyl-CoA starter unit with 6 malonyl-CoA units. YWA1 is then methylated by bfoE at position C-6 to yield foncesin which is further methylated at position C-8 by bfoD to produce fonsecin B. A key enzyme in the biosynthetic pathway is the cytochrome P450 monooxygenase bfoB which catalyzes the oxidative dimerization of fonsecin B to bifonsecin B. Bfob also catalyzes the oxidative dimerization of rubrofusarin B into nigerone. The stereoselectivity of bfoB is influenced by the two natural monomeric substrates; homodimerization of fonsecin B yields a stereochemically pure biaryl, M-foncerine B, while rubrofusarin B yields a mixture of enantiomers M- and P-nigerone. This Aspergillus brasiliensis (strain CBS 101740 / IMI 381727 / IBT 21946) protein is Non-reducing polyketide synthase albA.